The following is a 747-amino-acid chain: Ubiquitin carboxyl-terminal hydrolase 13 (747 aa).

The USP domain occupies phenylalanine 140–methionine 668. The active-site Nucleophile is the cysteine 149. 2 disordered regions span residues proline 172 to aspartate 305 and tyrosine 318 to serine 367. A compositionally biased stretch (basic and acidic residues) spans lysine 174–lysine 183. Serine 198 carries the phosphoserine modification. The span at proline 225–glycine 235 shows a compositional bias: polar residues. Basic and acidic residues predominate over residues histidine 251–glycine 260. A compositionally biased stretch (polar residues) spans glutamate 319–threonine 343. The Proton acceptor role is filled by histidine 619.

The protein belongs to the peptidase C19 family.

The catalysed reaction is Thiol-dependent hydrolysis of ester, thioester, amide, peptide and isopeptide bonds formed by the C-terminal Gly of ubiquitin (a 76-residue protein attached to proteins as an intracellular targeting signal).. In Saccharomyces cerevisiae (strain ATCC 204508 / S288c) (Baker's yeast), this protein is Ubiquitin carboxyl-terminal hydrolase 13 (UBP13).